The following is a 408-amino-acid chain: Protein CNPPD1 (408 aa).

A helical transmembrane segment spans residues 233-253 (CLLAVAYVSSVALAVASMAVI).

This sequence belongs to the CNPPD1 family.

It localises to the membrane. The sequence is that of Protein CNPPD1 (Cnppd1) from Rattus norvegicus (Rat).